Consider the following 354-residue polypeptide: AT-rich binding protein (354 aa).

Residues isoleucine 31 to histidine 54 form a C2H2-type 1 zinc finger. Disordered regions lie at residues leucine 84 to glutamine 124 and glutamate 256 to methionine 276. Basic and acidic residues-rich tracts occupy residues lysine 89–valine 100 and glutamine 109–glutamine 124. Over residues threonine 264–methionine 276 the composition is skewed to low complexity. 2 consecutive C2H2-type zinc fingers follow at residues tyrosine 285–histidine 309 and phenylalanine 315–histidine 338.

As to quaternary structure, homooctamer. Fat body.

It is found in the nucleus. In terms of biological role, may be a transcription factor for genes having (A+T) stretches in their promoter and/or enhancer regions. Binds to AT rich DNA. This is AT-rich binding protein from Sarcophaga peregrina (Flesh fly).